Reading from the N-terminus, the 307-residue chain is Small ribosomal subunit biogenesis GTPase RsgA (307 aa).

The segment at 1–21 (MPSEHPFSDGISTPNPKETMN) is disordered. Over residues 10–21 (GISTPNPKETMN) the composition is skewed to polar residues. The region spanning 85–242 (RQDAWKTKLI…LIDSPGLQEF (158 aa)) is the CP-type G domain. Residues 135 to 138 (NKAD) and 184 to 192 (GQSGMGKST) each bind GTP. Zn(2+) is bound by residues Cys-266, Cys-271, His-273, and Cys-279.

The protein belongs to the TRAFAC class YlqF/YawG GTPase family. RsgA subfamily. As to quaternary structure, monomer. Associates with 30S ribosomal subunit, binds 16S rRNA. The cofactor is Zn(2+).

The protein localises to the cytoplasm. Its function is as follows. One of several proteins that assist in the late maturation steps of the functional core of the 30S ribosomal subunit. Helps release RbfA from mature subunits. May play a role in the assembly of ribosomal proteins into the subunit. Circularly permuted GTPase that catalyzes slow GTP hydrolysis, GTPase activity is stimulated by the 30S ribosomal subunit. This Neisseria gonorrhoeae (strain ATCC 700825 / FA 1090) protein is Small ribosomal subunit biogenesis GTPase RsgA.